Consider the following 190-residue polypeptide: Nucleoside triphosphate pyrophosphatase (190 aa).

Aspartate 69 serves as the catalytic Proton acceptor.

The protein belongs to the Maf family. Requires a divalent metal cation as cofactor.

The protein resides in the cytoplasm. It carries out the reaction a ribonucleoside 5'-triphosphate + H2O = a ribonucleoside 5'-phosphate + diphosphate + H(+). It catalyses the reaction a 2'-deoxyribonucleoside 5'-triphosphate + H2O = a 2'-deoxyribonucleoside 5'-phosphate + diphosphate + H(+). Its function is as follows. Nucleoside triphosphate pyrophosphatase. May have a dual role in cell division arrest and in preventing the incorporation of modified nucleotides into cellular nucleic acids. The protein is Nucleoside triphosphate pyrophosphatase of Helicobacter pylori (strain ATCC 700392 / 26695) (Campylobacter pylori).